Here is a 1147-residue protein sequence, read N- to C-terminus: uncharacterized protein (1147 aa).

Disordered regions lie at residues 226–245 (FGQG…GQVD), 255–297 (IQGT…QEKA), 431–617 (SQHP…QSCI), 647–670 (EEMD…DPVR), 705–945 (HRHR…RRLQ), 1003–1032 (RQQQ…EAEK), and 1060–1090 (YQRR…RLAQ). The segment covering 268–296 (WQKDETQTEDTSKDNHHCIHTSKENHQEK) has biased composition (basic and acidic residues). The span at 431 to 441 (SQHPPKGKAQR) shows a compositional bias: basic residues. The span at 538-549 (PAGGALPAAGQA) shows a compositional bias: low complexity. The segment covering 584-603 (LNETSPLTQKPENQGAQQSL) has biased composition (polar residues). Residues 743-752 (NQKTSNNISN) show a composition bias toward polar residues. A coiled-coil region spans residues 743–804 (NQKTSNNISN…ESKAEKKSQL (62 aa)). Positions 768-802 (TDKSKAPKREKEGKLHEEAEAAVGKSKESKAEKKS) are enriched in basic and acidic residues. The span at 807 to 819 (KGKKTGAKGKRTR) shows a compositional bias: basic residues. Residues 870-884 (SQVSIDGRSSPTQTA) are compositionally biased toward polar residues. Positions 895 to 945 (DRSHEDPSKAFLVKREQEKASRDRLRAERAEMRRLEVERKRREQEEQRRLQ) are enriched in basic and acidic residues. Residues 907 to 1112 (VKREQEKASR…QKDALKKHLH (206 aa)) adopt a coiled-coil conformation.

This is an uncharacterized protein from Bos taurus (Bovine).